The chain runs to 228 residues: MEKRSGIGRLYQGSFFNRYSRAGGNPGAPSVRCARVRGDDGVLVFTPFGNDRRGTSSTTMKQWVKMMNDIVIDKRGFRLGVGMVIMNRQGELLWGRRVGNPDAWQFPQGGLLPNETLREALNRELDEEVGLSPHDVIYLRETRQWISYRLPKKFRRPEHRGPVCIGQRQKWFLLQFTGKDDAISLDHCSQPEFDQWRWVDYWYPVDHVVEFKRDVYQKVLTEFAEFIR.

The interval 1 to 70 (MEKRSGIGRL…KQWVKMMNDI (70 aa)) is unknown. The segment at 71 to 228 (VIDKRGFRLG…VLTEFAEFIR (158 aa)) is rppH domain. A Nudix hydrolase domain is found at 76–221 (GFRLGVGMVI…KRDVYQKVLT (146 aa)). The Nudix box signature appears at 109 to 130 (GGLLPNETLREALNRELDEEVG).

In the C-terminal section; belongs to the Nudix hydrolase family. RppH subfamily. It depends on a divalent metal cation as a cofactor.

In terms of biological role, accelerates the degradation of transcripts by removing pyrophosphate from the 5'-end of triphosphorylated RNA, leading to a more labile monophosphorylated state that can stimulate subsequent ribonuclease cleavage. In Coxiella burnetii (strain RSA 493 / Nine Mile phase I), this protein is RNA pyrophosphohydrolase.